Here is a 151-residue protein sequence, read N- to C-terminus: Prefoldin subunit alpha (151 aa).

The protein belongs to the prefoldin subunit alpha family. In terms of assembly, heterohexamer of two alpha and four beta subunits.

Its subcellular location is the cytoplasm. Functionally, molecular chaperone capable of stabilizing a range of proteins. Seems to fulfill an ATP-independent, HSP70-like function in archaeal de novo protein folding. This Aeropyrum pernix (strain ATCC 700893 / DSM 11879 / JCM 9820 / NBRC 100138 / K1) protein is Prefoldin subunit alpha (pfdA).